The primary structure comprises 348 residues: Dihydroorotase (348 aa).

Zn(2+) contacts are provided by H17 and H19. Substrate contacts are provided by residues 19–21 (HLR) and N45. Residues K103, H140, and H178 each contribute to the Zn(2+) site. An N6-carboxylysine modification is found at K103. H140 lines the substrate pocket. L223 lines the substrate pocket. D251 provides a ligand contact to Zn(2+). Residue D251 is part of the active site. Residues H255 and A267 each coordinate substrate.

The protein belongs to the metallo-dependent hydrolases superfamily. DHOase family. Class II DHOase subfamily. As to quaternary structure, homodimer. Zn(2+) serves as cofactor.

It carries out the reaction (S)-dihydroorotate + H2O = N-carbamoyl-L-aspartate + H(+). Its pathway is pyrimidine metabolism; UMP biosynthesis via de novo pathway; (S)-dihydroorotate from bicarbonate: step 3/3. Its function is as follows. Catalyzes the reversible cyclization of carbamoyl aspartate to dihydroorotate. The protein is Dihydroorotase of Escherichia coli (strain SMS-3-5 / SECEC).